Here is a 356-residue protein sequence, read N- to C-terminus: Probable arabinogalactan endo-beta-1,4-galactanase A (356 aa).

The N-terminal stretch at 1–21 (MLGKTVLLPLLVLLCHSLASA) is a signal peptide. N-linked (GlcNAc...) asparagine glycosylation is present at N133. E157 acts as the Proton donor in catalysis. The active-site Nucleophile is E268.

This sequence belongs to the glycosyl hydrolase 53 family.

The protein resides in the secreted. The enzyme catalyses The enzyme specifically hydrolyzes (1-&gt;4)-beta-D-galactosidic linkages in type I arabinogalactans.. Its function is as follows. Endogalactanase involved in the degradation of plant cell wall polysaccharides, and more particularly of hairy regions of pectin. The polypeptide is Probable arabinogalactan endo-beta-1,4-galactanase A (galA) (Aspergillus fumigatus (strain CBS 144.89 / FGSC A1163 / CEA10) (Neosartorya fumigata)).